Reading from the N-terminus, the 143-residue chain is uncharacterized protein (143 aa).

Residues 24–78 enclose the HTH cro/C1-type domain; sequence IRQRREWQNMSQTTLGEAIGVTFQQVQKYEKGVNRVGAGRLQQISKALKVEPSYF. Residues 35 to 54 constitute a DNA-binding region (H-T-H motif); the sequence is QTTLGEAIGVTFQQVQKYEK.

This is an uncharacterized protein from Sinorhizobium fredii (strain NBRC 101917 / NGR234).